A 157-amino-acid polypeptide reads, in one-letter code: Small ribosomal subunit protein uS7 (157 aa).

Belongs to the universal ribosomal protein uS7 family. In terms of assembly, part of the 30S ribosomal subunit. Contacts proteins S9 and S11.

Its function is as follows. One of the primary rRNA binding proteins, it binds directly to 16S rRNA where it nucleates assembly of the head domain of the 30S subunit. Is located at the subunit interface close to the decoding center, probably blocks exit of the E-site tRNA. The protein is Small ribosomal subunit protein uS7 of Chlamydia muridarum (strain MoPn / Nigg).